A 450-amino-acid polypeptide reads, in one-letter code: C4-dicarboxylate transport protein (450 aa).

8 helical membrane-spanning segments follow: residues 25–45, 56–76, 90–110, 162–182, 200–220, 234–254, 319–339, and 367–387; these read VVFA…YGAA, LIKM…IASM, MAYF…VANV, ILQV…VGDA, LVNI…AFTI, LVLT…GAVA, IYMT…LTLG, and AATL…ILGV.

Belongs to the dicarboxylate/amino acid:cation symporter (DAACS) (TC 2.A.23) family.

The protein localises to the cell inner membrane. Responsible for the transport of dicarboxylates such as succinate, fumarate, and malate from the periplasm across the membrane. The polypeptide is C4-dicarboxylate transport protein (Acidovorax sp. (strain JS42)).